A 240-amino-acid polypeptide reads, in one-letter code: ATP-dependent dethiobiotin synthetase BioD (240 aa).

Position 12 to 17 (E12 to V17) interacts with ATP. T16 contributes to the Mg(2+) binding site. Residue K37 is part of the active site. S41 lines the substrate pocket. ATP contacts are provided by residues D54, E115–G118, N179–Q180, and P207–I209. Mg(2+) contacts are provided by D54 and E115.

The protein belongs to the dethiobiotin synthetase family. As to quaternary structure, homodimer. Requires Mg(2+) as cofactor.

Its subcellular location is the cytoplasm. It carries out the reaction (7R,8S)-7,8-diammoniononanoate + CO2 + ATP = (4R,5S)-dethiobiotin + ADP + phosphate + 3 H(+). Its pathway is cofactor biosynthesis; biotin biosynthesis; biotin from 7,8-diaminononanoate: step 1/2. Catalyzes a mechanistically unusual reaction, the ATP-dependent insertion of CO2 between the N7 and N8 nitrogen atoms of 7,8-diaminopelargonic acid (DAPA, also called 7,8-diammoniononanoate) to form a ureido ring. The chain is ATP-dependent dethiobiotin synthetase BioD from Clostridium acetobutylicum (strain ATCC 824 / DSM 792 / JCM 1419 / IAM 19013 / LMG 5710 / NBRC 13948 / NRRL B-527 / VKM B-1787 / 2291 / W).